A 291-amino-acid polypeptide reads, in one-letter code: uncharacterized protein (291 aa).

Disordered stretches follow at residues 29-50 (SEKPVGAPPASQIPGLSDLRDS) and 168-291 (RKVK…AELK). A Phosphoserine modification is found at Ser50. 2 stretches are compositionally biased toward polar residues: residues 176 to 186 (NSKNPSKTGTP) and 205 to 217 (QKNSSPTNFSKLI). Over residues 221–237 (YKDEWLQQQKAEADRRT) the composition is skewed to basic and acidic residues. Residues 280 to 291 (SSPSESTPAELK) show a composition bias toward polar residues.

This is an uncharacterized protein from Mus musculus (Mouse).